The chain runs to 414 residues: Thyroid hormone receptor beta-B (414 aa).

A modulating region spans residues 1 to 59 (MPSSMSVRLFTASAAQRKKIQEGDCCVVLAGKTQGRFILIGAVARVSGYIPSYLDKDEL). 2 consecutive NR C4-type zinc fingers follow at residues 60–80 (CVVCGDKATGYHYRCITCEGC) and 98–122 (CKYEGKCVIDKVTRNQCQECRFKKC). Residues 60-134 (CVVCGDKATG…VGMATDLVLD (75 aa)) constitute a DNA-binding region (nuclear receptor). Residues 170–414 (EEWELIQVVT…PPLFLEVFED (245 aa)) enclose the NR LBD domain.

The protein belongs to the nuclear hormone receptor family. NR1 subfamily.

Its subcellular location is the nucleus. High affinity receptor for triiodothyronine (T3). The chain is Thyroid hormone receptor beta-B (thrb-b) from Xenopus laevis (African clawed frog).